A 222-amino-acid chain; its full sequence is 7-cyano-7-deazaguanine synthase (222 aa).

11–21 (LSGGMDSAVLL) is an ATP binding site. The Zn(2+) site is built by Cys192, Cys200, Cys203, and Cys206.

The protein belongs to the QueC family. Zn(2+) is required as a cofactor.

The enzyme catalyses 7-carboxy-7-deazaguanine + NH4(+) + ATP = 7-cyano-7-deazaguanine + ADP + phosphate + H2O + H(+). The protein operates within purine metabolism; 7-cyano-7-deazaguanine biosynthesis. Its function is as follows. Catalyzes the ATP-dependent conversion of 7-carboxy-7-deazaguanine (CDG) to 7-cyano-7-deazaguanine (preQ(0)). The polypeptide is 7-cyano-7-deazaguanine synthase (Sulfurihydrogenibium sp. (strain YO3AOP1)).